Here is a 419-residue protein sequence, read N- to C-terminus: E3 ubiquitin-protein ligase RNFT1 (419 aa).

Residues 1-120 (MKLRAQFDRG…SGESDLESGE (120 aa)) are disordered. 2 stretches are compositionally biased toward polar residues: residues 31-44 (EPSSREGNGLSLTL) and 72-82 (GSSSGSTNGRG). A compositionally biased stretch (basic residues) spans 84–102 (TSRRMRTASHSHSHTHGHG). The next 6 helical transmembrane spans lie at 141–161 (FIVILCAKLVIQHALGLAVAV), 187–207 (LHCAWLLLFLTSSSLLVFYTF), 217–237 (FFANATIDYHNFWEVLWSVGV), 240–260 (FILKFIFMGFKCLILLVPCPL), 270–290 (YMLIEEVGQLYQVIAPVPLWF), and 303–323 (VGLTLGILLALLYLIMKLLAL). The tract at residues 352–403 (IREAGDICPICQADFKQPRVLVCQHIFCEECIAQWLNQERTCPLCRTVITDK) is required for ubiquitin ligase activity and for protection against ER stress-induced cell death. An RING-type zinc finger spans residues 359 to 397 (CPICQADFKQPRVLVCQHIFCEECIAQWLNQERTCPLCR).

It localises to the endoplasmic reticulum membrane. The catalysed reaction is S-ubiquitinyl-[E2 ubiquitin-conjugating enzyme]-L-cysteine + [acceptor protein]-L-lysine = [E2 ubiquitin-conjugating enzyme]-L-cysteine + N(6)-ubiquitinyl-[acceptor protein]-L-lysine.. It participates in protein modification; protein ubiquitination. E3 ubiquitin-protein ligase that acts in the endoplasmic reticulum (ER)-associated degradation (ERAD) pathway, which targets misfolded proteins that accumulate in the endoplasmic reticulum (ER) for ubiquitination and subsequent proteasome-mediated degradation. Protects cells from ER stress-induced apoptosis. This Danio rerio (Zebrafish) protein is E3 ubiquitin-protein ligase RNFT1 (rnft1).